A 430-amino-acid polypeptide reads, in one-letter code: Ribosomal protein uS12 methylthiotransferase RimO (430 aa).

The 116-residue stretch at 1-116 (MRVGIKVLGC…IANAIENGTD (116 aa)) folds into the MTTase N-terminal domain. The [4Fe-4S] cluster site is built by C10, C46, C79, C148, C152, and C155. Residues 134 to 365 (LEERPYAYVK…LLQAEISNSR (232 aa)) form the Radical SAM core domain. Positions 367–430 (DRFVGKKLKF…DEYDMWGSVI (64 aa)) constitute a TRAM domain.

This sequence belongs to the methylthiotransferase family. RimO subfamily. Monomer. The cofactor is [4Fe-4S] cluster.

Its subcellular location is the cytoplasm. The enzyme catalyses L-aspartate(89)-[ribosomal protein uS12]-hydrogen + (sulfur carrier)-SH + AH2 + 2 S-adenosyl-L-methionine = 3-methylsulfanyl-L-aspartate(89)-[ribosomal protein uS12]-hydrogen + (sulfur carrier)-H + 5'-deoxyadenosine + L-methionine + A + S-adenosyl-L-homocysteine + 2 H(+). Its function is as follows. Catalyzes the methylthiolation of an aspartic acid residue of ribosomal protein uS12. In Thermotoga maritima (strain ATCC 43589 / DSM 3109 / JCM 10099 / NBRC 100826 / MSB8), this protein is Ribosomal protein uS12 methylthiotransferase RimO.